Reading from the N-terminus, the 327-residue chain is Lipoyl synthase (327 aa).

Positions 66, 71, 77, 92, 96, 99, and 306 each coordinate [4Fe-4S] cluster. Positions 78–295 (FSKGTATFMI…EKEAYELGFS (218 aa)) constitute a Radical SAM core domain.

Belongs to the radical SAM superfamily. Lipoyl synthase family. The cofactor is [4Fe-4S] cluster.

The protein resides in the cytoplasm. The catalysed reaction is [[Fe-S] cluster scaffold protein carrying a second [4Fe-4S](2+) cluster] + N(6)-octanoyl-L-lysyl-[protein] + 2 oxidized [2Fe-2S]-[ferredoxin] + 2 S-adenosyl-L-methionine + 4 H(+) = [[Fe-S] cluster scaffold protein] + N(6)-[(R)-dihydrolipoyl]-L-lysyl-[protein] + 4 Fe(3+) + 2 hydrogen sulfide + 2 5'-deoxyadenosine + 2 L-methionine + 2 reduced [2Fe-2S]-[ferredoxin]. It functions in the pathway protein modification; protein lipoylation via endogenous pathway; protein N(6)-(lipoyl)lysine from octanoyl-[acyl-carrier-protein]: step 2/2. Its function is as follows. Catalyzes the radical-mediated insertion of two sulfur atoms into the C-6 and C-8 positions of the octanoyl moiety bound to the lipoyl domains of lipoate-dependent enzymes, thereby converting the octanoylated domains into lipoylated derivatives. The polypeptide is Lipoyl synthase (Neisseria meningitidis serogroup B (strain ATCC BAA-335 / MC58)).